The chain runs to 345 residues: Protein RecA (345 aa).

Position 65 to 72 (65 to 72 (GPESSGKT)) interacts with ATP.

Belongs to the RecA family.

It localises to the cytoplasm. Can catalyze the hydrolysis of ATP in the presence of single-stranded DNA, the ATP-dependent uptake of single-stranded DNA by duplex DNA, and the ATP-dependent hybridization of homologous single-stranded DNAs. It interacts with LexA causing its activation and leading to its autocatalytic cleavage. The chain is Protein RecA from Colwellia psychrerythraea (strain 34H / ATCC BAA-681) (Vibrio psychroerythus).